The primary structure comprises 512 residues: Reduced folate transporter (512 aa).

Met-1 carries the N-acetylmethionine modification. Over 1–29 (MVPTGQVAEKQACEEPRQDRELKSWRWLV) the chain is Cytoplasmic. Residues 30 to 50 (FYLCFFGFMAQLRPGESFITP) form a helical membrane-spanning segment. Folate contacts are provided by Ile-48 and Thr-49. At 51 to 62 (YLLERNFTKEQV) the chain is on the extracellular side. Asn-56 carries N-linked (GlcNAc...) asparagine glycosylation. Residues 63-85 (TNEIIPMLPYSHLAVLVPIFLLT) traverse the membrane as a helical segment. The Cytoplasmic portion of the chain corresponds to 86-89 (DYLR). Residues 90–110 (YKPVLVLQCLSFVCVWLLLLL) traverse the membrane as a helical segment. Topologically, residues 111 to 114 (GTSV) are extracellular. Residues 115 to 137 (VHMQLMEVFYSITMAARIAYSSY) form a helical membrane-spanning segment. Folate is bound by residues Glu-121 and Arg-131. Over 138-151 (IFSLVQPSRYQRMA) the chain is Cytoplasmic. The chain crosses the membrane as a helical span at residues 152–176 (SYSRAAVLLGVFISSVLGQVLVTLG). Val-162 contacts folate. Residues 177 to 181 (GISTY) lie on the Extracellular side of the membrane. A helical transmembrane segment spans residues 182–200 (MLNCISLGFILFSLSLSLF). Over 201 to 266 (LKRPKRSLFF…ELVKNVRQPQ (66 aa)) the chain is Cytoplasmic. Residues 267–292 (LRLWCLWWVFNSAGYYLITYYVHVLW) traverse the membrane as a helical segment. Residues Tyr-281, Tyr-282, and Tyr-286 each contribute to the folate site. Over 293 to 300 (KITDSRLN) the chain is Extracellular. The helical transmembrane segment at 301 to 323 (YNGAVDAASTLLSAITAFTAGFV) threads the bilayer. Residues 324–329 (NIRWAL) lie on the Cytoplasmic side of the membrane. A helical membrane pass occupies residues 330–350 (WSKLVIASVIAIQAGLVFCMF). The Extracellular segment spans residues 351-353 (QIP). A helical transmembrane segment spans residues 354 to 377 (DIWVCYVTFVLFRGAYQFLVPIAT). Residues Arg-366 and Gln-370 each contribute to the folate site. The Cytoplasmic portion of the chain corresponds to 378-391 (FQIASSLSKELCAL). Residues 392–415 (VFGINTFLATALKTSITLVVSDKR) traverse the membrane as a helical segment. The tract at residues 400–412 (ATALKTSITLVVS) is required for substrate-binding. Residues 416–423 (GLGLQVHQ) lie on the Extracellular side of the membrane. The helical transmembrane segment at 424–448 (QFRIYFMYFLTLSIICLAWAGLDGL) threads the bilayer. The Cytoplasmic segment spans residues 449–512 (RYYRRGRHQP…RADLRVEAKA (64 aa)). Phosphoserine occurs at positions 466, 471, and 476. The segment at 479–512 (DGDLRRPQPSAPQLLPEDGSVEDGRADLRVEAKA) is disordered. Positions 500–512 (EDGRADLRVEAKA) are enriched in basic and acidic residues.

This sequence belongs to the reduced folate carrier (RFC) transporter (TC 2.A.48) family. Expressed in liver, heart, brain, spleen, lung and skeletal muscle.

Its subcellular location is the cell membrane. The protein localises to the apical cell membrane. The protein resides in the basolateral cell membrane. It catalyses the reaction 5-amino-1-(5-phospho-beta-D-ribosyl)imidazole-4-carboxamide(in) + (6S)-5-methyl-5,6,7,8-tetrahydrofolate(out) = 5-amino-1-(5-phospho-beta-D-ribosyl)imidazole-4-carboxamide(out) + (6S)-5-methyl-5,6,7,8-tetrahydrofolate(in). Its function is as follows. Antiporter that mediates the import of reduced folates, driven by the export of organic anions. Also acts as an importer of immunoreactive cyclic dinucleotides, but with a lower transporter activity. Mechanistically, acts as a secondary active transporter, which exports intracellular organic anions down their concentration gradients to facilitate the uptake of its substrates. Has high affinity for N5-methyltetrahydrofolate, the predominant circulating form of folate. Also mediates the import of antifolate drug methotrexate. 5-amino-4-imidazolecarboxamide riboside (AICAR), when phosphorylated to AICAR monophosphate, can serve as an organic anion for antiporter activity. This chain is Reduced folate transporter, found in Rattus norvegicus (Rat).